The following is a 1161-amino-acid chain: Auxin response factor 19 (1161 aa).

The interval 1 to 20 (MMKQAQQQPPPPPASSAATT) is disordered. Residues 154-256 (FCKTLTASDT…QLLLGIRRAN (103 aa)) constitute a DNA-binding region (TF-B3). Positions 573-598 (NQMQQQHASSTQGQQPATSQPLLLPQ) are disordered. The region spanning 1027-1111 (RTFTKVYKRG…KCIRILSPQE (85 aa)) is the PB1 domain.

Belongs to the ARF family. As to quaternary structure, homodimers and heterodimers. In terms of tissue distribution, expressed in roots, culms, leaves and young panicles.

The protein localises to the nucleus. Auxin response factors (ARFs) are transcriptional factors that bind specifically to the DNA sequence 5'-TGTCTC-3' found in the auxin-responsive promoter elements (AuxREs). The sequence is that of Auxin response factor 19 (ARF19) from Oryza sativa subsp. japonica (Rice).